We begin with the raw amino-acid sequence, 314 residues long: Methionyl-tRNA formyltransferase (314 aa).

Ser-112–Pro-115 serves as a coordination point for (6S)-5,6,7,8-tetrahydrofolate.

The protein belongs to the Fmt family.

It carries out the reaction L-methionyl-tRNA(fMet) + (6R)-10-formyltetrahydrofolate = N-formyl-L-methionyl-tRNA(fMet) + (6S)-5,6,7,8-tetrahydrofolate + H(+). Its function is as follows. Attaches a formyl group to the free amino group of methionyl-tRNA(fMet). The formyl group appears to play a dual role in the initiator identity of N-formylmethionyl-tRNA by promoting its recognition by IF2 and preventing the misappropriation of this tRNA by the elongation apparatus. The polypeptide is Methionyl-tRNA formyltransferase (Legionella pneumophila subsp. pneumophila (strain Philadelphia 1 / ATCC 33152 / DSM 7513)).